The sequence spans 281 residues: Secretory carrier-associated membrane protein 5 (281 aa).

The interval 1–49 (MHHDPNPFDEGADDNPFSNGGGGGARRGGGGGGGGGGGGGKSQFSFGFG) is disordered. The Cytoplasmic portion of the chain corresponds to 1–139 (MHHDPNPFDE…AQKLQYLAFA (139 aa)). Positions 19–49 (NGGGGGARRGGGGGGGGGGGGGKSQFSFGFG) are enriched in gly residues. Residues 76-102 (KELLQWEADLKRREADIRRREEALKSA) adopt a coiled-coil conformation. A run of 4 helical transmembrane segments spans residues 140-160 (SWLG…VCWI), 167-187 (LFFL…LMWY), 202-222 (FGWF…AAIA), and 250-270 (IFYF…IWVL). At 271 to 281 (QKVYMYFRGHK) the chain is on the cytoplasmic side.

Belongs to the SCAMP family.

It is found in the cell membrane. The protein localises to the cytoplasmic vesicle. The protein resides in the secretory vesicle membrane. In terms of biological role, probably involved in membrane trafficking. This chain is Secretory carrier-associated membrane protein 5 (SCAMP5), found in Oryza sativa subsp. japonica (Rice).